A 30-amino-acid chain; its full sequence is Trypsin inhibitor 2 (30 aa).

Cystine bridges form between cysteine 2–cysteine 19, cysteine 9–cysteine 21, and cysteine 15–cysteine 27.

Belongs to the protease inhibitor I7 (squash-type serine protease inhibitor) family.

It is found in the secreted. Inhibits trypsin. This Ecballium elaterium (Squirting cucumber) protein is Trypsin inhibitor 2.